Consider the following 231-residue polypeptide: Large ribosomal subunit protein uL1 (231 aa).

The protein belongs to the universal ribosomal protein uL1 family. Part of the 50S ribosomal subunit.

Its function is as follows. Binds directly to 23S rRNA. The L1 stalk is quite mobile in the ribosome, and is involved in E site tRNA release. In terms of biological role, protein L1 is also a translational repressor protein, it controls the translation of the L11 operon by binding to its mRNA. The sequence is that of Large ribosomal subunit protein uL1 from Kosmotoga olearia (strain ATCC BAA-1733 / DSM 21960 / TBF 19.5.1).